We begin with the raw amino-acid sequence, 444 residues long: MFS-type transporter dbaD (444 aa).

The segment covering 1–13 (MTEQPPQNHSVDL) has biased composition (polar residues). The interval 1–57 (MTEQPPQNHSVDLNQNEDNNENDYRSSSATDAERPCEPKIEESTAKPPTGPPAPPPP) is disordered. N-linked (GlcNAc...) asparagine glycosylation occurs at asparagine 8. Positions 31–44 (DAERPCEPKIEEST) are enriched in basic and acidic residues. Over residues 48 to 57 (PTGPPAPPPP) the composition is skewed to pro residues. The next 11 membrane-spanning stretches (helical) occupy residues 62–82 (LVAWLHVIGGFMLFFNTWGIM), 107–127 (WIGSIQATMLLLVGFFTGSIY), 134–154 (ALLVVGSFCIVFGHMMLSLCK), 159–179 (VLLAQGFCVGIGAGCLFVPCV), 192–212 (TALGLAVSGSSMGGVIYPIVL), 223–243 (WSVRVIGFIALGTLLVPIAVM), 267–287 (MAFTLASLLAFMGLFALLFYI), 301–323 (MAFYIVPILNAASCFGRTIPNAM), 330–350 (FNLIAPCCLAVGVLILCLLAV), 356–376 (LIVIALLSGFFGGALIGLPPL), and 394–414 (MGFGMVGLGVLAGGPAGGAIL). The N-linked (GlcNAc...) asparagine glycan is linked to asparagine 421. Residues 424–444 (GLWVYGGVTSLVAGFIICIAV) form a helical membrane-spanning segment.

It belongs to the major facilitator superfamily. Monocarboxylate porter (TC 2.A.1.13) family.

Its subcellular location is the cell membrane. Functionally, MFS-type transporter; part of the gene cluster that mediates the biosynthesis of the antibiotic 2,4- dihydroxy-3-methyl-6-(2-oxopropyl)benzaldehyde (DHMBA) and its derivatives. Is probably involved in the transport of the metabolites to the environment. This chain is MFS-type transporter dbaD, found in Emericella nidulans (strain FGSC A4 / ATCC 38163 / CBS 112.46 / NRRL 194 / M139) (Aspergillus nidulans).